Consider the following 548-residue polypeptide: MAKFMTPVIQDNPSGWGPCAVPEQFRDMPYQPFSKGDRLGKVADWTGATYQDKRYTNKYSSQFGGGSQYAYFHEEDETSFQLVDTARTQKTAYQRNRMRFAQRNLRRDKDRRNMLQFNLQTLPKSAKQKERERIRLQKKFQKQFGVRQKWDQKSQKPRDSSVEVRSDWEVKEEMDFPQLMKMRYLEVSEPQDIECCGALEYYDKAFDRITTRSEKPLRSIKRIFHTVTTTDDPVIRKLAKTQGNVFATDAILATLMSCTRSVYSWDIVVQRVGSKLFFDKRDNSDFDLLTVSETANEPPQDEGNSFNSPRNLAMEATYINHNFSQQCLRMGKERYNFPNPNPFVEDDMDKNEIASVAYRYRRWKLGDDIDLIVRCEHDGVMTGANGEVSFINIKTLNEWDSRHCNGVDWRQKLDSQRGAVIATELKNNSYKLARWTCCALLAGSEYLKLGYVSRYHVKDSSRHVILGTQQFKPNEFASQINLSVENAWGILRCVIDICMKLEEGKYLILKDPNKQVIRVYSLPDGTFSSDEDDEEEEEEEEEEEEEEA.

Lysine 53 is subject to N6-acetyllysine. At serine 161 the chain carries Phosphoserine. Residues 285-299 (DFDLLTVSETANEPP) are RNA gate. Residues 523–548 (PDGTFSSDEDDEEEEEEEEEEEEEEA) are disordered. 2 positions are modified to phosphoserine: serine 528 and serine 529. The span at 529–548 (SDEDDEEEEEEEEEEEEEEA) shows a compositional bias: acidic residues.

Belongs to the eIF-3 subunit D family. In terms of assembly, component of the eukaryotic translation initiation factor 3 (eIF-3) complex, which is composed of 13 subunits: EIF3A, EIF3B, EIF3C, EIF3D, EIF3E, EIF3F, EIF3G, EIF3H, EIF3I, EIF3J, EIF3K, EIF3L and EIF3M. The eIF-3 complex appears to include 3 stable modules: module A is composed of EIF3A, EIF3B, EIF3G and EIF3I; module B is composed of EIF3F, EIF3H, and EIF3M; and module C is composed of EIF3C, EIF3D, EIF3E, EIF3K and EIF3L. EIF3C of module C binds EIF3B of module A and EIF3H of module B, thereby linking the three modules. EIF3J is a labile subunit that binds to the eIF-3 complex via EIF3B. The eIF-3 complex interacts with RPS6KB1 under conditions of nutrient depletion. Mitogenic stimulation leads to binding and activation of a complex composed of MTOR and RPTOR, leading to phosphorylation and release of RPS6KB1 and binding of EIF4B to eIF-3.

It localises to the cytoplasm. Its function is as follows. mRNA cap-binding component of the eukaryotic translation initiation factor 3 (eIF-3) complex, a complex required for several steps in the initiation of protein synthesis of a specialized repertoire of mRNAs. The eIF-3 complex associates with the 40S ribosome and facilitates the recruitment of eIF-1, eIF-1A, eIF-2:GTP:methionyl-tRNAi and eIF-5 to form the 43S pre-initiation complex (43S PIC). The eIF-3 complex stimulates mRNA recruitment to the 43S PIC and scanning of the mRNA for AUG recognition. The eIF-3 complex is also required for disassembly and recycling of post-termination ribosomal complexes and subsequently prevents premature joining of the 40S and 60S ribosomal subunits prior to initiation. The eIF-3 complex specifically targets and initiates translation of a subset of mRNAs involved in cell proliferation, including cell cycling, differentiation and apoptosis, and uses different modes of RNA stem-loop binding to exert either translational activation or repression. In the eIF-3 complex, EIF3D specifically recognizes and binds the 7-methylguanosine cap of a subset of mRNAs. In Bos taurus (Bovine), this protein is Eukaryotic translation initiation factor 3 subunit D.